The sequence spans 439 residues: Coiled-coil domain-containing protein 166 (439 aa).

The tract at residues 1–28 (MAPKKKRGPSAGSQPGGAAAAGAEQPLS) is disordered. A compositionally biased stretch (low complexity) spans 9 to 23 (PSAGSQPGGAAAAGA). 2 coiled-coil regions span residues 27-74 (LSER…EENR) and 121-213 (DGVR…VRAL). The segment at 276–439 (PGGPPLWERP…AAAEASPGRA (164 aa)) is disordered. Over residues 338–365 (VLSSMDSRVPSLATSKVGSRMPSLTASR) the composition is skewed to polar residues. Composition is skewed to low complexity over residues 376 to 392 (SLEG…RVSS) and 428 to 439 (AEAAAEASPGRA).

This chain is Coiled-coil domain-containing protein 166 (CCDC166), found in Homo sapiens (Human).